The sequence spans 1629 residues: Ferredoxin-dependent glutamate synthase 2, chloroplastic (1629 aa).

A chloroplast-targeting transit peptide spans 1–107; it reads MALQSPGATG…LEDIISERGA (107 aa). The For GATase activity role is filled by Cys108. Residues 108-507 enclose the Glutamine amidotransferase type-2 domain; that stretch reads CGVGFIANLE…PGMMISVDLE (400 aa). 1186-1243 serves as a coordination point for FMN; sequence LAETQKTLIGNGLRERVIIRVDGGFKSGVDVLIAAAMGADEYGFGTLAMIATGCIMAR. [3Fe-4S] cluster is bound by residues Cys1239, Cys1245, and Cys1250. The segment at 1599-1629 is disordered; sequence SEEDTPEANSDHILKTTTGDEEQVSSTLAEK.

Belongs to the glutamate synthase family. [3Fe-4S] cluster is required as a cofactor. It depends on FAD as a cofactor. Requires FMN as cofactor. In terms of tissue distribution, expressed predominantly in roots and slightly in leaves. Low expression in the leaf mesophyll and phloem companion cell-sieve element complex.

It localises to the plastid. The protein resides in the chloroplast stroma. It carries out the reaction 2 oxidized [2Fe-2S]-[ferredoxin] + 2 L-glutamate = L-glutamine + 2 reduced [2Fe-2S]-[ferredoxin] + 2-oxoglutarate + 2 H(+). Its pathway is amino-acid biosynthesis; L-glutamate biosynthesis via GLT pathway; L-glutamate from 2-oxoglutarate and L-glutamine (ferredoxin route): step 1/1. It participates in energy metabolism; nitrogen metabolism. Functionally, may play a role in primary nitrogen assimilation in roots. Could supply a constitutive level of glutamate to maintain a basal level of protein synthesis. This Arabidopsis thaliana (Mouse-ear cress) protein is Ferredoxin-dependent glutamate synthase 2, chloroplastic (GLU2).